The primary structure comprises 172 residues: MGKKIAVVLTYYFEDSEYTEPAKAFKEAGHELTVIEKEKGKTVKGKQGTAEVTVDASIDDVNSSDFDALLIPGGFSPDQLRADDRFVQFTKAFMTDKKPVFAICHGPQLLINAKALDGRKATGYTSIRVDMENAGADVVDKEVVVCQDQLVTSRTPDDIPAFNRESLALLEK.

Residues 3 to 171 (KKIAVVLTYY…FNRESLALLE (169 aa)) enclose the PfpI endopeptidase domain. Catalysis depends on Cys-104, which acts as the Nucleophile. His-105 is an active-site residue.

It belongs to the peptidase C56 family.

Its function is as follows. Functions in the protection against aldehyde-stress, possibly by degrading damaged proteins. The polypeptide is General stress protein 18 (yfkM) (Bacillus subtilis (strain 168)).